The sequence spans 842 residues: Unconventional myosin-Ia (842 aa).

The 686-residue stretch at 1–686 (GVEDLILLEP…TLFYLEEQRR (686 aa)) folds into the Myosin motor domain. An ATP-binding site is contributed by 93-100 (GESGAGKT). An actin-binding region spans residues 563-585 (VAILMKNLYSKNPNYIRCIKPND). IQ domains lie at 689-712 (LQQLATLIQKVYRGWRCRTHYQQM), 713-733 (RKSQILLSAWFRGNKQKKHYG), and 735-764 (IRSSVLLIQAFVRGWKARKNYRKYFRSGAR).

Belongs to the TRAFAC class myosin-kinesin ATPase superfamily. Myosin family. In terms of processing, phosphorylated by ALPK1.

Functionally, involved in directing the movement of organelles along actin filaments. This is Unconventional myosin-Ia (Myo1a) from Rattus norvegicus (Rat).